A 476-amino-acid polypeptide reads, in one-letter code: Hydrogenase-4 component F homolog (476 aa).

The next 12 membrane-spanning stretches (helical) occupy residues 1-21, 25-45, 54-74, 120-140, 153-173, 202-222, 235-255, 270-290, 307-327, 368-388, 402-422, and 442-462; these read MSAAAVILFPFIGILLLSQIS, ISSWLNTLFSFLSFVGSLFLL, FFLVDELNIVFILLTNFIGFT, IGLMWVSIEMATLSTVLMVGI, YFILGGVGIALALFGTFLFYI, LVNIGFIFILIGYGTKVGLFP, PTPISAVLSGLLLNVALYAIL, AGPLLTAMGLASVLFAALMFY, MGIISFAFGIGGALANFAGLL, LGWGLVFGVLAIAGLPPMGVF, SPLLAACLAVGLITALGALIL, and LYLPMFSHFLLVFAAGVYIPP.

It belongs to the complex I subunit 5 family.

Its subcellular location is the cell inner membrane. This Methylacidiphilum infernorum (isolate V4) (Methylokorus infernorum (strain V4)) protein is Hydrogenase-4 component F homolog (hyfF).